A 349-amino-acid polypeptide reads, in one-letter code: Glycerol-3-phosphate dehydrogenase [NAD(+)], cytoplasmic (349 aa).

10-15 (GSGNWG) contacts NAD(+). K120 contacts substrate. A153 serves as a coordination point for NAD(+). K204 functions as the Proton acceptor in the catalytic mechanism. R269 is a binding site for NAD(+). 269–270 (RN) lines the substrate pocket. Residue K289 is modified to N6-succinyllysine. Residues K296 and Q298 each contribute to the NAD(+) site. A Phosphotyrosine modification is found at Y326.

This sequence belongs to the NAD-dependent glycerol-3-phosphate dehydrogenase family. Homodimer.

It is found in the cytoplasm. The enzyme catalyses sn-glycerol 3-phosphate + NAD(+) = dihydroxyacetone phosphate + NADH + H(+). Its function is as follows. Has glycerol-3-phosphate dehydrogenase activity. The chain is Glycerol-3-phosphate dehydrogenase [NAD(+)], cytoplasmic (GPD1) from Bos taurus (Bovine).